Here is a 333-residue protein sequence, read N- to C-terminus: tRNA N6-adenosine threonylcarbamoyltransferase (333 aa).

Positions 111 and 115 each coordinate Fe cation. Residues 134–138, Asp-167, Gly-180, and Asn-272 contribute to the substrate site; that span reads LVSGG. Asp-300 is a Fe cation binding site.

It belongs to the KAE1 / TsaD family. Fe(2+) is required as a cofactor.

Its subcellular location is the cytoplasm. The catalysed reaction is L-threonylcarbamoyladenylate + adenosine(37) in tRNA = N(6)-L-threonylcarbamoyladenosine(37) in tRNA + AMP + H(+). In terms of biological role, required for the formation of a threonylcarbamoyl group on adenosine at position 37 (t(6)A37) in tRNAs that read codons beginning with adenine. Is involved in the transfer of the threonylcarbamoyl moiety of threonylcarbamoyl-AMP (TC-AMP) to the N6 group of A37, together with TsaE and TsaB. TsaD likely plays a direct catalytic role in this reaction. The polypeptide is tRNA N6-adenosine threonylcarbamoyltransferase (Legionella pneumophila (strain Corby)).